Here is a 481-residue protein sequence, read N- to C-terminus: Glutamyl-tRNA(Gln) amidotransferase subunit A (481 aa).

Catalysis depends on charge relay system residues Lys-74 and Ser-149. The Acyl-ester intermediate role is filled by Ser-173.

This sequence belongs to the amidase family. GatA subfamily. As to quaternary structure, heterotrimer of A, B and C subunits.

The enzyme catalyses L-glutamyl-tRNA(Gln) + L-glutamine + ATP + H2O = L-glutaminyl-tRNA(Gln) + L-glutamate + ADP + phosphate + H(+). Allows the formation of correctly charged Gln-tRNA(Gln) through the transamidation of misacylated Glu-tRNA(Gln) in organisms which lack glutaminyl-tRNA synthetase. The reaction takes place in the presence of glutamine and ATP through an activated gamma-phospho-Glu-tRNA(Gln). In Francisella philomiragia subsp. philomiragia (strain ATCC 25017 / CCUG 19701 / FSC 153 / O#319-036), this protein is Glutamyl-tRNA(Gln) amidotransferase subunit A.